A 175-amino-acid chain; its full sequence is MAEKRNIFLVGPMGAGKSTIGRQLAQILGMEFIDTDAEIEQRAGADISWIFDVEGEEGFRKREERIINELTQKQGIVLSTGGGAIVSKDNRNYLSARGTVIYLETTVEKQFQRTQRDKKRPLLQNVEDPRQVLEDLAKVRNPLYEEVADIILPTDEQSAKLMANQIIDLIDNLKI.

14 to 19 provides a ligand contact to ATP; the sequence is GAGKST. A Mg(2+)-binding site is contributed by Ser18. Substrate-binding residues include Asp36, Arg60, and Gly82. ATP is bound at residue Arg120. Arg140 serves as a coordination point for substrate. Gln157 serves as a coordination point for ATP.

Belongs to the shikimate kinase family. As to quaternary structure, monomer. Mg(2+) serves as cofactor.

The protein localises to the cytoplasm. It carries out the reaction shikimate + ATP = 3-phosphoshikimate + ADP + H(+). Its pathway is metabolic intermediate biosynthesis; chorismate biosynthesis; chorismate from D-erythrose 4-phosphate and phosphoenolpyruvate: step 5/7. Catalyzes the specific phosphorylation of the 3-hydroxyl group of shikimic acid using ATP as a cosubstrate. This chain is Shikimate kinase, found in Histophilus somni (strain 2336) (Haemophilus somnus).